The following is a 628-amino-acid chain: tRNA uridine 5-carboxymethylaminomethyl modification enzyme MnmG (628 aa).

FAD-binding positions include 14–19 (GAGHAG), Val-126, and Ser-181. 273–287 (GPRYCPSIEDKVVRF) lines the NAD(+) pocket. Gln-370 lines the FAD pocket.

The protein belongs to the MnmG family. As to quaternary structure, homodimer. Heterotetramer of two MnmE and two MnmG subunits. FAD serves as cofactor.

The protein resides in the cytoplasm. NAD-binding protein involved in the addition of a carboxymethylaminomethyl (cmnm) group at the wobble position (U34) of certain tRNAs, forming tRNA-cmnm(5)s(2)U34. The sequence is that of tRNA uridine 5-carboxymethylaminomethyl modification enzyme MnmG from Bacillus subtilis (strain 168).